The primary structure comprises 461 residues: Lysosomal proton-coupled steroid conjugate and bile acid symporter SLC46A3 (461 aa).

Residues 1–25 (MKIPFVEPVICLSVFAVTLNSPLTT) form the signal peptide. Over 26-70 (QYVYRRIWEETGNYSIALESNTSECAKNKSSPIFAFQEEVQKKVS) the chain is Extracellular. 3 N-linked (GlcNAc...) asparagine glycosylation sites follow: N38, N46, and N53. A helical transmembrane segment spans residues 71–91 (LFNLEMDISGLIPGLVSTFVF). Residues 92–101 (LSHSDHGGRK) are Cytoplasmic-facing. Residues 102-124 (FPLILSSVGALANSAWLCLLSYF) form a helical membrane-spanning segment. The Extracellular portion of the chain corresponds to 125 to 133 (ALPIQLLIA). The chain crosses the membrane as a helical span at residues 134-156 (STFIGALFGNYTTFLGASFAYIV). Residues 157-170 (DQCKEKKQRTIRIA) are Cytoplasmic-facing. Residues 171–191 (IIDFLFGVVSGLTGLSSGYFI) form a helical membrane-spanning segment. Over 192 to 195 (RGLG) the chain is Extracellular. The chain crosses the membrane as a helical span at residues 196–216 (FVWSFLIVTVALFVNLIYILL). Residues 217 to 261 (FLEDSMKESSSQNISVSWTETFKNLFHRTYMLFKNASGEQQSLCC) lie on the Cytoplasmic side of the membrane. The helical transmembrane segment at 262 to 282 (LLLFTMITYFFVTIGVSPIFV) threads the bilayer. At 283-294 (LYELDSPLCWDE) the chain is on the extracellular side. A helical membrane pass occupies residues 295 to 315 (VLIGYGSALGSVTFFSSFLGI). Residues 316–324 (WLFSYCMED) are Cytoplasmic-facing. The helical transmembrane segment at 325–345 (IHMAFIGTFTTMVGMAMTAFA) threads the bilayer. Residues 346 to 347 (RT) lie on the Extracellular side of the membrane. Residues 348-368 (TLMMFLVRLPFLFTVMPLSVL) form a helical membrane-spanning segment. At 369–382 (RSMISKVVHSTEQG) the chain is on the cytoplasmic side. The helical transmembrane segment at 383-403 (TMFACLAFLETLGGITAVSTF) threads the bilayer. The Extracellular segment spans residues 404-415 (NGIYSATVAWCK). Residues 416–436 (GFVFLLSAVLLLIPAISLCVI) form a helical membrane-spanning segment. At 437-461 (KYVSRNTGSYVLLIQEESSEDTSDR) the chain is on the cytoplasmic side. Residues 446–449 (YVLL) carry the Tyrosine-based lysosomal-sorting motif motif.

The protein belongs to the major facilitator superfamily. SLC46A family.

It localises to the lysosome membrane. It carries out the reaction estrone 3-sulfate(out) + n H(+)(out) = estrone 3-sulfate(in) + n H(+)(in). It catalyses the reaction 25-hydroxyvitamin D3 sulfate(out) + n H(+)(out) = 25-hydroxyvitamin D3 sulfate(in) + n H(+)(in). The enzyme catalyses cholate(out) + n H(+)(out) = cholate(in) + n H(+)(in). The catalysed reaction is glycocholate(out) + n H(+)(out) = glycocholate(in) + n H(+)(in). It carries out the reaction taurocholate(out) + n H(+)(out) = taurocholate(in) + n H(+)(in). It catalyses the reaction dehydroepiandrosterone 3-sulfate(out) + n H(+)(out) = dehydroepiandrosterone 3-sulfate(in) + n H(+)(in). The enzyme catalyses N-acetyl-D-muramoyl-L-alanyl-D-isoglutamine(out) + n H(+)(out) = N-acetyl-D-muramoyl-L-alanyl-D-isoglutamine(in) + n H(+)(in). The catalysed reaction is 2',3'-cGAMP(out) + n H(+)(out) = 2',3'-cGAMP(in) + n H(+)(in). Its function is as follows. Lysosomal proton-coupled steroid conjugate and bile acid transporter. Preferentially recognizes lipophilic steroid conjugates or bile acis as endogenous substrates and seems to mediate escape from lysosomes to the cytoplasm. Modulates hepatic cytosolic copper homeostasis, maybe acting as a lysosomal copper transporter and sequestering copper ions in the lysosome. Delivers pathogen-associated molecular patterns to cytosolic pattern recognition receptors as part of the innate immune response to microbes. Selectively transports bacterial muramyl dipeptide (MDP) into the cytosol for recognition by NOD2, triggering inflammatory responses. Likely acts as a redundant importer of cyclic GMP-AMP dinucleotides (cGAMPs) in monocyte and macrophage cell lineages. The transport mechanism, its electrogenicity and stoichiometry remain to be elucidated. The polypeptide is Lysosomal proton-coupled steroid conjugate and bile acid symporter SLC46A3 (SLC46A3) (Bos taurus (Bovine)).